Consider the following 1248-residue polypeptide: MEFIPTQTFYNRRYQPRPWTPRPTIQVIRPRPRPQRKAGQLAQLISAVNKLTMRAVPQQKPRKNRKNKKQKQKQQAPRNNMNQKKQPPKKKPAQKKKKPGRRERMCMKIENDCIFEVKHEGKVTGYACLVGDKVMKPAHVKGTIDNADLAKLAFKRSSKYDLECAQIPVHMKSDASKFTHEKPEGYYNWHHGAVQYSGGRFTIPTGAGKPGDSGRPIFDNKGRVVAIVLGGANEGARTALSVVTWNKDIVTKITPEGAEEWSLAIPVMCLLANTTFPCSQPPCAPCCYEKEPEKTLRMLEDNVMSPGYYQLLQASLTCSPRRQRRSIKDNFNVYKATRPYLAHCPDCGEGHSCHSPVALERIRNEATDGTLKIQVSLQIGIKTDDSHDWTKLRYMDNHMPADAERAGLLVRTSAPCTITGTMGHFILARCPKGETLTVGFTDGRKISHSCTHPFHHDPPVIGREKFHSRPQHGKELPCSTYVQSNAATAEEVEVHMPPDTPDRTLMSQQSGNVKITVNSQTVRYKCNCGDSNEGLTTTDKVINNCKVDQCHAAVTNHKKWQYNSPLVPRNVELGDRKGKIHIPFPLANVTCRGPKARNPTVTYGKNQVIMLLYPDHPTLLSYRNMGEEPNYQEEWVTHKKEVRLTVPTEGLEVTWGNNEPYKYWPQLSTNGTAHGHPHEIILYYYELYPTMTVVVVSVASFVLLSMVGVAVGMCMCARRRCITPYELTPGATVPFLLSLICCIRTAKAATYQEAAVYLWNEQQPLFWLQAIIPLAALIVLCNCLRLLPCCCKTLTFLAVMSVGAHTVSAYEHVTVIPNTVGVPYKTLVNRPGYSPMVLEMELLSVTLEPTLSLDYITCEYKTVIPSPYVKCLRYSECKDKSLPDYSCKVFTGVYPFMWGGAYCFCDTENTQLSEAHVEKSESCKTEFASAYRAHTASASGKLRVLYQGNNVTVSAYANGDHAVTVKDAKFIVGPMSSAWTPFDNKIVVYKGDVYNMDYPPFGAGRPGQFGDIQSRTPESEDVYANTQLVLQRPSAGTVHVPYSQAPSGFKYWLKERGASLQHTAPFGCQIATNPVRAMNCAVGNMPISIDIPDAAFTRVVDAPSLTDMSCEVPACTHSSDFGGAAIIKYAASKKGKCAVHSMTNAVTIREAEIEVEGNSQLQISFSTALASAEFRVQVCSTQVHCAAECHPPKDHIVNYPASHTTLGVQDISATAMSWVQKITGGVGLVVAVAALILIVVLCVSFSRH.

Residues 1–10 (MEFIPTQTFY) are compositionally biased toward polar residues. The segment at 1–104 (MEFIPTQTFY…KKKKPGRRER (104 aa)) is disordered. Residues 36–68 (RKAGQLAQLISAVNKLTMRAVPQQKPRKNRKNK) form a host transcription inhibition region. The segment covering 60-72 (KPRKNRKNKKQKQ) has biased composition (basic residues). A Nuclear localization signal motif is present at residues 61–99 (PRKNRKNKKQKQKQQAPRNNMNQKKQPPKKKPAQKKKKP). A compositionally biased stretch (low complexity) spans 73–85 (KQQAPRNNMNQKK). The binding to the viral RNA stretch occupies residues 84–114 (KKQPPKKKPAQKKKKPGRRERMCMKIENDCI). Residues 86-101 (QPPKKKPAQKKKKPGR) show a composition bias toward basic residues. The interval 99 to 113 (PGRRERMCMKIENDC) is ribosome-binding. Cys-113 and Cys-128 are oxidised to a cystine. One can recognise a Peptidase S3 domain in the interval 113–261 (CIFEVKHEGK…KITPEGAEEW (149 aa)). His-139 acts as the Charge relay system in catalysis. A Nuclear export signal motif is present at residues 144–154 (IDNADLAKLAF). Residues 155 to 160 (KRSSKY) are interaction with spike glycoprotein E2. Catalysis depends on Asp-161, which acts as the Charge relay system. The segment at 183-193 (PEGYYNWHHGA) is dimerization of the capsid protein. Ser-213 (charge relay system) is an active-site residue. A dimerization of the capsid protein region spans residues 219 to 223 (DNKGR). Residues 262 to 274 (SLAIPVMCLLANT) form a functions as an uncleaved signal peptide for the precursor of protein E3/E2 region. Over 262-692 (SLAIPVMCLL…YYYELYPTMT (431 aa)) the chain is Extracellular. 9 disulfides stabilise this stretch: Cys-269/Cys-278, Cys-283/Cys-287, Cys-286/Cys-318, Cys-344/Cys-450, Cys-347/Cys-353, Cys-416/Cys-430, Cys-478/Cys-591, Cys-526/Cys-550, and Cys-528/Cys-545. Asn-273 carries an N-linked (GlcNAc...) asparagine; by host glycan. 2 interaction with host Mxra8 receptor regions span residues 351 to 354 (HSCH) and 387 to 389 (HDW). 2 interaction with host Mxra8 receptor regions span residues 509–512 (QSGN) and 541–547 (VINNCKV). Asn-588 and Asn-670 each carry an N-linked (GlcNAc...) asparagine; by host glycan. The helical transmembrane segment at 693–713 (VVVVSVASFVLLSMVGVAVGM) threads the bilayer. Over 714 to 748 (CMCARRRCITPYELTPGATVPFLLSLICCIRTAKA) the chain is Cytoplasmic. The interaction with the capsid protein stretch occupies residues 716 to 720 (CARRR). 3 S-palmitoyl cysteine; by host lipidation sites follow: Cys-721, Cys-741, and Cys-742. A transient transmembrane before p62-6K protein processing region spans residues 721 to 741 (CITPYELTPGATVPFLLSLIC). A disulfide bond links Cys-721 and Cys-742. Topologically, residues 749–763 (ATYQEAAVYLWNEQQ) are extracellular. Residues 764–784 (PLFWLQAIIPLAALIVLCNCL) form a helical membrane-spanning segment. Over 785 to 795 (RLLPCCCKTLT) the chain is Cytoplasmic. A helical transmembrane segment spans residues 796-816 (FLAVMSVGAHTVSAYEHVTVI). Residues 817 to 1224 (PNTVGVPYKT…AMSWVQKITG (408 aa)) are Extracellular-facing. 3 disulfide bridges follow: Cys-858/Cys-923, Cys-871/Cys-903, and Cys-877/Cys-887. Residues 893-910 (VYPFMWGGAYCFCDTENT) are E1 fusion peptide loop. N-linked (GlcNAc...) asparagine; by host glycans are attached at residues Asn-950 and Asn-1079. 4 disulfide bridges follow: Cys-1068-Cys-1080, Cys-1110-Cys-1185, Cys-1115-Cys-1189, and Cys-1137-Cys-1179. The chain crosses the membrane as a helical span at residues 1225-1245 (GVGLVVAVAALILIVVLCVSF). Cys-1242 is lipidated: S-palmitoyl cysteine; by host. Topologically, residues 1246-1248 (SRH) are cytoplasmic.

Homodimer. Homomultimer. Interacts with host karyopherin KPNA4; this interaction allows the nuclear import of the viral capsid protein. Interacts with spike glycoprotein E2. Interacts with host IRAK1; the interaction leads to inhibition of IRAK1-dependent signaling. In terms of assembly, the precursor of protein E3/E2 and E1 form a heterodimer shortly after synthesis. As to quaternary structure, interacts with spike glycoprotein E2. The precursor of protein E3/E2 and E1 form a heterodimer shortly after synthesis. Processing of the precursor of protein E3/E2 into E2 and E3 results in a heterodimer of the spike glycoproteins E2 and E1. Spike at virion surface are constituted of three E2-E1 heterodimers. After target cell attachment and endocytosis, E1 change conformation to form homotrimers. Interacts with 6K protein. Interacts with host MXRA8; this interaction mediates virus entry. The interaction involves 2 adjacent E2-E1 heterodimers. Interacts with spike glycoprotein E1. Processing of the precursor of protein E3/E2 into E2 and E3 results in a heterodimer of the spike glycoproteins E2 and E1. Spike at virion surface are constituted of a trimer of E2-E1 heterodimers. Interacts with 6K protein. Interacts with host MXRA8; this interaction mediates virus entry. The interaction involves 2 adjacent E2-E1 heterodimers. In terms of assembly, oligomer. Interacts with spike glycoprotein E1. Interacts with spike glycoprotein E2. Structural polyprotein: Specific enzymatic cleavages in vivo yield mature proteins. Capsid protein is auto-cleaved during polyprotein translation, unmasking a signal peptide at the N-terminus of the precursor of E3/E2. The remaining polyprotein is then targeted to the host endoplasmic reticulum, where host signal peptidase cleaves it into pE2, 6K and E1 proteins. pE2 is further processed to mature E3 and E2 by host furin in trans-Golgi vesicle. In terms of processing, palmitoylated via thioester bonds. These palmitoylations may induce disruption of the C-terminus transmembrane. This would result in the reorientation of E2 C-terminus from lumenal to cytoplasmic side. Post-translationally, N-glycosylated. Palmitoylated via thioester bonds.

It is found in the virion. Its subcellular location is the host cytoplasm. The protein resides in the host cell membrane. The protein localises to the host nucleus. It localises to the virion membrane. It is found in the host Golgi apparatus. Its subcellular location is the host trans-Golgi network. The protein resides in the host endoplasmic reticulum. The catalysed reaction is Autocatalytic release of the core protein from the N-terminus of the togavirus structural polyprotein by hydrolysis of a -Trp-|-Ser- bond.. Functionally, forms an icosahedral capsid with a T=4 symmetry composed of 240 copies of the capsid protein surrounded by a lipid membrane through which penetrate 80 spikes composed of trimers of E1-E2 heterodimers. The capsid protein binds to the viral RNA genome at a site adjacent to a ribosome binding site for viral genome translation following genome release. Possesses a protease activity that results in its autocatalytic cleavage from the nascent structural protein. Following its self-cleavage, the capsid protein transiently associates with ribosomes, and within several minutes the protein binds to viral RNA and rapidly assembles into icosahedric core particles. The resulting nucleocapsid eventually associates with the cytoplasmic domain of the spike glycoprotein E2 at the cell membrane, leading to budding and formation of mature virions. In case of infection, new virions attach to target cells and after clathrin-mediated endocytosis their membrane fuses with the host endosomal membrane. This leads to the release of the nucleocapsid into the cytoplasm, followed by an uncoating event necessary for the genomic RNA to become accessible. The uncoating might be triggered by the interaction of capsid proteins with ribosomes. Binding of ribosomes would release the genomic RNA since the same region is genomic RNA-binding and ribosome-binding. Specifically inhibits interleukin-1 receptor-associated kinase 1/IRAK1-dependent signaling during viral entry, representing a means by which the alphaviruses may evade innate immune detection and activation prior to viral gene expression. Degrades host cyclic GMP-AMP synthase (CGAS) thereby inhibiting the cGAS-STING pathway. Provides the signal sequence for the translocation of the precursor of protein E3/E2 to the host endoplasmic reticulum. Furin-cleaved E3 remains associated with spike glycoprotein E1 and mediates pH protection of the latter during the transport via the secretory pathway. After virion release from the host cell, the assembly protein E3 is gradually released in the extracellular space. In terms of biological role, plays a role in viral attachment to target host cell, by binding to the cell receptor MXRA8. Synthesized as a p62 precursor which is processed by furin at the cell membrane just before virion budding, giving rise to E2-E1 heterodimer. The p62-E1 heterodimer is stable, whereas E2-E1 is unstable and dissociate at low pH. p62 is processed at the last step, presumably to avoid E1 fusion activation before its final export to cell surface. E2 C-terminus contains a transitory transmembrane that would be disrupted by palmitoylation, resulting in reorientation of the C-terminal tail from lumenal to cytoplasmic side. This step is critical since E2 C-terminus is involved in budding by interacting with capsid proteins. This release of E2 C-terminus in cytoplasm occurs lately in protein export, and precludes premature assembly of particles at the endoplasmic reticulum membrane. Its function is as follows. Acts as a viroporin that participates in virus glycoprotein processing and transport to the plasma membrane, cell permeabilization and budding of viral particles. Disrupts the calcium homeostasis of the cell, probably at the endoplasmic reticulum level. This leads to cytoplasmic calcium elevation. Because of its lipophilic properties, the 6K protein is postulated to influence the selection of lipids that interact with the transmembrane domains of the glycoproteins, which, in turn, affects the deformability of the bilayer required for the extreme curvature that occurs as budding proceeds. Present in low amount in virions, about 3% compared to viral glycoproteins. Functionally, class II viral fusion protein. Fusion activity is inactive as long as E1 is bound to E2 in mature virion. After virus attachment to target cell via host MXRA8 and endocytosis, acidification of the endosome induce dissociation of E1/E2 heterodimer and concomitant trimerization of the E1 subunits. This E1 trimer is fusion active, and promotes release of viral nucleocapsid in cytoplasm after endosome and viral membrane fusion. Efficient fusion requires the presence of cholesterol and sphingolipid in the target membrane. The chain is Structural polyprotein from Chikungunya virus (strain Nagpur) (CHIKV).